Consider the following 115-residue polypeptide: U3-lycotoxin-Ls1g (115 aa).

Positions 1–20 (MKFVLLFGVFLVTLFSYSSA) are cleaved as a signal peptide. Positions 21 to 44 (EMLDDFDQADEDELLSLIEKEEAR) are excised as a propeptide. Intrachain disulfides connect cysteine 48–cysteine 63, cysteine 55–cysteine 72, cysteine 62–cysteine 87, and cysteine 74–cysteine 85.

It belongs to the neurotoxin 19 (CSTX) family. 01 subfamily. Expressed by the venom gland.

It is found in the secreted. This chain is U3-lycotoxin-Ls1g, found in Lycosa singoriensis (Wolf spider).